Here is a 266-residue protein sequence, read N- to C-terminus: Glucosamine-6-phosphate deaminase 1 (266 aa).

The Proton acceptor; for enolization step role is filled by aspartate 67. Residue asparagine 136 is the For ring-opening step of the active site. The active-site Proton acceptor; for ring-opening step is histidine 138. Glutamate 143 serves as the catalytic For ring-opening step.

It belongs to the glucosamine/galactosamine-6-phosphate isomerase family. As to quaternary structure, homohexamer.

The protein localises to the cytoplasm. The catalysed reaction is alpha-D-glucosamine 6-phosphate + H2O = beta-D-fructose 6-phosphate + NH4(+). Functionally, catalyzes the reversible conversion of alpha-D-glucosamine 6-phosphate (GlcN-6P) into beta-D-fructose 6-phosphate (Fru-6P) and ammonium ion, a regulatory reaction step in de novo uridine diphosphate-N-acetyl-alpha-D-glucosamine (UDP-GlcNAc) biosynthesis via hexosamine pathway. This chain is Glucosamine-6-phosphate deaminase 1 (GPI1), found in Giardia intestinalis (Giardia lamblia).